Here is a 172-residue protein sequence, read N- to C-terminus: Ribosome maturation factor RimP (172 aa).

The protein belongs to the RimP family.

The protein resides in the cytoplasm. In terms of biological role, required for maturation of 30S ribosomal subunits. The protein is Ribosome maturation factor RimP of Nitratidesulfovibrio vulgaris (strain ATCC 29579 / DSM 644 / CCUG 34227 / NCIMB 8303 / VKM B-1760 / Hildenborough) (Desulfovibrio vulgaris).